Consider the following 43-residue polypeptide: Protein PsbN (43 aa).

The chain crosses the membrane as a helical span at residues 7–29 (VAIFLSGLLVSFTGYALYTAFGQ).

It belongs to the PsbN family.

The protein resides in the plastid. It localises to the chloroplast thylakoid membrane. May play a role in photosystem I and II biogenesis. The protein is Protein PsbN of Draba nemorosa (Woodland whitlowgrass).